Here is a 686-residue protein sequence, read N- to C-terminus: MTARRILVTSALPYANGQIHIGHLVEYIQTDIWVRFQRMMGNEVYYVGADDTHGTPVMLRAEKEGITPKALIDRVWTEHKRDFDSFLVSFDNYYSTDAEENRELCEKIYLALKAEDLIAEREVEQFFDPVKNMFLPDRFIKGECPKCGAKDQYGDSCEVCGTTYVPTDLKNPYSVVSGATPVRKSSAHYFFKLSDPRCETFLREWVADLAQPEAANKMQEWLGAEGEASTLSDWDISRDAPYFGFEIPGAPGKYFYVWLDAPIGYYASFQNLAAKKGIDFDAWVGPHSTAEQYHFIGKDILYFHTLFWPAMLRFSGYRTPTNVFAHGFLTVDGAKMSKSRGTFITAQSYVDTGMNPEWLRYYFAAKLNASMEDLDLNLDDFIARVNSDLIGKYVNIASRAAGFLVKRFEGKVDEAALAHPLLEQLRQAAPQVAHLYEAREYSKALRLVMELTDAVNAFVDTEKPWELAKDENKRAALHAACSVSLEAFRLLTVYLKPVVPNVAAGVERFLNVEPLDWRAIDKQLSAASPVQAYQHLMTRVDAKQVDALLAANRESLQATAAPAAAGAAIEPIADTITIDDFAKVDLRVAKIVECQKVEGSNKLLQLTLDLGEGRTRNVFSGIQSAYTPEQLVGKLTVVVANLAPRKMKFGVSEGMVLAASAADEKATPGLYILEPHEGAVPGMRIG.

Residues Pro-13–His-23 carry the 'HIGH' region motif. Residues Cys-144, Cys-147, Cys-157, and Cys-160 each contribute to the Zn(2+) site. The 'KMSKS' region signature appears at Lys-335–Ser-339. An ATP-binding site is contributed by Lys-338. The region spanning Asp-580 to Gly-686 is the tRNA-binding domain.

Belongs to the class-I aminoacyl-tRNA synthetase family. MetG type 1 subfamily. Homodimer. Zn(2+) serves as cofactor.

It is found in the cytoplasm. The catalysed reaction is tRNA(Met) + L-methionine + ATP = L-methionyl-tRNA(Met) + AMP + diphosphate. Is required not only for elongation of protein synthesis but also for the initiation of all mRNA translation through initiator tRNA(fMet) aminoacylation. The polypeptide is Methionine--tRNA ligase (Cupriavidus necator (strain ATCC 17699 / DSM 428 / KCTC 22496 / NCIMB 10442 / H16 / Stanier 337) (Ralstonia eutropha)).